A 573-amino-acid polypeptide reads, in one-letter code: PCNA-interacting partner (573 aa).

2 disordered regions span residues 470–505 (VGKA…SKGK) and 531–560 (PKVP…RGKL).

Belongs to the PARI family. As to quaternary structure, interacts with RAD51 and PCNA. Interacts with PARP1. Interacts with TASOR. Expressed in the ovary, Sertoli cells of the testis and in granular cells within the cerebellum.

It localises to the cytoplasm. The protein resides in the nucleus. Required to suppress inappropriate homologous recombination, thereby playing a central role DNA repair and in the maintenance of genomic stability. Antagonizes homologous recombination by interfering with the formation of the RAD51-DNA homologous recombination structure. Binds single-strand DNA and poly(A) homopolymers. Positively regulate the poly(ADP-ribosyl)ation activity of PARP1; however such function may be indirect. This chain is PCNA-interacting partner (Parpbp), found in Mus musculus (Mouse).